The following is a 182-amino-acid chain: ATP synthase subunit b 1 (182 aa).

Residues 24–44 form a helical membrane-spanning segment; sequence FADPAFWVSIAFLMVVGFVYI.

Belongs to the ATPase B chain family. As to quaternary structure, F-type ATPases have 2 components, F(1) - the catalytic core - and F(0) - the membrane proton channel. F(1) has five subunits: alpha(3), beta(3), gamma(1), delta(1), epsilon(1). F(0) has three main subunits: a(1), b(2) and c(10-14). The alpha and beta chains form an alternating ring which encloses part of the gamma chain. F(1) is attached to F(0) by a central stalk formed by the gamma and epsilon chains, while a peripheral stalk is formed by the delta and b chains.

The protein localises to the cell inner membrane. F(1)F(0) ATP synthase produces ATP from ADP in the presence of a proton or sodium gradient. F-type ATPases consist of two structural domains, F(1) containing the extramembraneous catalytic core and F(0) containing the membrane proton channel, linked together by a central stalk and a peripheral stalk. During catalysis, ATP synthesis in the catalytic domain of F(1) is coupled via a rotary mechanism of the central stalk subunits to proton translocation. In terms of biological role, component of the F(0) channel, it forms part of the peripheral stalk, linking F(1) to F(0). This Rhodospirillum rubrum (strain ATCC 11170 / ATH 1.1.1 / DSM 467 / LMG 4362 / NCIMB 8255 / S1) protein is ATP synthase subunit b 1.